Here is a 108-residue protein sequence, read N- to C-terminus: UPF0060 membrane protein RER_49640 (108 aa).

4 consecutive transmembrane segments (helical) span residues 8–28 (LLFVLAALLEIGGAWLVWQGI), 33–53 (GWIWVGLGVISLGLYGLVATM), 62–82 (ILAAYGGIFVAGSLLWAVVMD), and 87–107 (DRFDIAGALICLVGVGVIMYA).

The protein belongs to the UPF0060 family.

Its subcellular location is the cell membrane. In Rhodococcus erythropolis (strain PR4 / NBRC 100887), this protein is UPF0060 membrane protein RER_49640.